A 632-amino-acid polypeptide reads, in one-letter code: 1-deoxy-D-xylulose-5-phosphate synthase (632 aa).

Thiamine diphosphate is bound by residues histidine 73 and 114 to 116 (SHA). Position 146 (aspartate 146) interacts with Mg(2+). Thiamine diphosphate is bound by residues 147–148 (GA), asparagine 176, tyrosine 287, and glutamate 368. Asparagine 176 contributes to the Mg(2+) binding site.

It belongs to the transketolase family. DXPS subfamily. As to quaternary structure, homodimer. The cofactor is Mg(2+). Thiamine diphosphate serves as cofactor.

It catalyses the reaction D-glyceraldehyde 3-phosphate + pyruvate + H(+) = 1-deoxy-D-xylulose 5-phosphate + CO2. The protein operates within metabolic intermediate biosynthesis; 1-deoxy-D-xylulose 5-phosphate biosynthesis; 1-deoxy-D-xylulose 5-phosphate from D-glyceraldehyde 3-phosphate and pyruvate: step 1/1. Catalyzes the acyloin condensation reaction between C atoms 2 and 3 of pyruvate and glyceraldehyde 3-phosphate to yield 1-deoxy-D-xylulose-5-phosphate (DXP). The sequence is that of 1-deoxy-D-xylulose-5-phosphate synthase from Corynebacterium glutamicum (strain R).